The following is a 274-amino-acid chain: 2,3,4,5-tetrahydropyridine-2,6-dicarboxylate N-succinyltransferase (274 aa).

Substrate contacts are provided by Arg104 and Asp141.

It belongs to the transferase hexapeptide repeat family. Homotrimer.

The protein localises to the cytoplasm. It catalyses the reaction (S)-2,3,4,5-tetrahydrodipicolinate + succinyl-CoA + H2O = (S)-2-succinylamino-6-oxoheptanedioate + CoA. The protein operates within amino-acid biosynthesis; L-lysine biosynthesis via DAP pathway; LL-2,6-diaminopimelate from (S)-tetrahydrodipicolinate (succinylase route): step 1/3. The sequence is that of 2,3,4,5-tetrahydropyridine-2,6-dicarboxylate N-succinyltransferase from Shewanella putrefaciens (strain CN-32 / ATCC BAA-453).